A 480-amino-acid chain; its full sequence is Probable serine/threonine-protein phosphatase 2A regulatory subunit B'' subunit TON2 (480 aa).

EF-hand domains are found at residues valine 186–asparagine 221, threonine 294–glutamate 329, and aspartate 369–lysine 404. The Ca(2+) site is built by aspartate 307, aspartate 309, serine 311, serine 313, and glutamate 318.

As to quaternary structure, interacts with PP2AA1. In terms of tissue distribution, widely expressed.

The protein resides in the cytoplasm. Its subcellular location is the cytoskeleton. Probable regulatory subunit of type 2A protein phosphatase involved in the control of the dynamic organization of the cortical cytoskeleton. Plays an important role in the organization of interphase microtubule arrays in part through the regulation of nucleation geometry. Required for the reorganization of cortical arrays in response to light. The protein is Probable serine/threonine-protein phosphatase 2A regulatory subunit B'' subunit TON2 (TON2) of Arabidopsis thaliana (Mouse-ear cress).